Here is a 541-residue protein sequence, read N- to C-terminus: uncharacterized protein (541 aa).

The protein resides in the virion. This is an uncharacterized protein from Acanthamoeba polyphaga mimivirus (APMV).